We begin with the raw amino-acid sequence, 278 residues long: Sulfur carrier protein FdhD (278 aa).

The Cysteine persulfide intermediate role is filled by Cys124.

It belongs to the FdhD family.

The protein resides in the cytoplasm. In terms of biological role, required for formate dehydrogenase (FDH) activity. Acts as a sulfur carrier protein that transfers sulfur from IscS to the molybdenum cofactor prior to its insertion into FDH. The polypeptide is Sulfur carrier protein FdhD (Burkholderia cenocepacia (strain ATCC BAA-245 / DSM 16553 / LMG 16656 / NCTC 13227 / J2315 / CF5610) (Burkholderia cepacia (strain J2315))).